Here is a 534-residue protein sequence, read N- to C-terminus: NEDD8-activating enzyme E1 regulatory subunit (534 aa).

Residue A2 is modified to N-acetylalanine. K6 and K341 each carry N6-acetyllysine. The interval 331–344 (DMIADSNKYIKLQN) is interaction with UBA3.

This sequence belongs to the ubiquitin-activating E1 family. ULA1 subfamily. Heterodimer of UBA3 and NAE1. The complex binds NEDD8 and UBE2M. Binds APP and TP53BP2. Ubiquitinated by TRIP12, leading to its degradation by the proteasome. As to expression, expressed throughout the brain. In hippocampus, strongly expressed in granule cells and in the pyramidal cell layer. Strongly expressed in the piriform cortex. In the cerebellum, expressed only in Purkinje cells.

The protein resides in the cell membrane. It participates in protein modification; protein neddylation. Binding of TP53BP2 to the regulatory subunit NAE1 decreases neddylation activity. Regulatory subunit of the dimeric UBA3-NAE1 E1 enzyme. E1 activates NEDD8 by first adenylating its C-terminal glycine residue with ATP, thereafter linking this residue to the side chain of the catalytic cysteine, yielding a NEDD8-UBA3 thioester and free AMP. E1 finally transfers NEDD8 to the catalytic cysteine of UBE2M. Necessary for cell cycle progression through the S-M checkpoint. Overexpression of NAE1 causes apoptosis through deregulation of NEDD8 conjugation. The covalent attachment of NEDD8 to target proteins is known as 'neddylation' and the process is involved in the regulation of cell growth, viability and development. The sequence is that of NEDD8-activating enzyme E1 regulatory subunit (Nae1) from Rattus norvegicus (Rat).